A 142-amino-acid polypeptide reads, in one-letter code: Large ribosomal subunit protein uL13 (142 aa).

Belongs to the universal ribosomal protein uL13 family. Part of the 50S ribosomal subunit.

In terms of biological role, this protein is one of the early assembly proteins of the 50S ribosomal subunit, although it is not seen to bind rRNA by itself. It is important during the early stages of 50S assembly. This Alcanivorax borkumensis (strain ATCC 700651 / DSM 11573 / NCIMB 13689 / SK2) protein is Large ribosomal subunit protein uL13.